The following is a 364-amino-acid chain: Peptide chain release factor 2 (364 aa).

Residue Gln-251 is modified to N5-methylglutamine.

It belongs to the prokaryotic/mitochondrial release factor family. In terms of processing, methylated by PrmC. Methylation increases the termination efficiency of RF2.

It is found in the cytoplasm. In terms of biological role, peptide chain release factor 2 directs the termination of translation in response to the peptide chain termination codons UGA and UAA. This is Peptide chain release factor 2 from Campylobacter hominis (strain ATCC BAA-381 / DSM 21671 / CCUG 45161 / LMG 19568 / NCTC 13146 / CH001A).